We begin with the raw amino-acid sequence, 305 residues long: Olfactory receptor 4F5 (305 aa).

The Extracellular segment spans residues 1-18; sequence MVTEFIFLGLSDSQELQT. A helical membrane pass occupies residues 19-42; it reads FLFMLFFVFYGGIVFGNLLIVITV. The Cytoplasmic portion of the chain corresponds to 43 to 50; sequence VSDSHLHS. A helical membrane pass occupies residues 51–72; that stretch reads PMYFLLANLSLIDLSLSSVTAP. Topologically, residues 73 to 93 are extracellular; it reads KMITDFFSQRKVISFKGCLVQ. Cys90 and Cys182 are joined by a disulfide. A helical transmembrane segment spans residues 94–113; that stretch reads IFLLHFFGGSEMVILIAMGF. The Cytoplasmic segment spans residues 114-132; that stretch reads DRYIAICKPLHYTTIMCGN. Residues 133–151 traverse the membrane as a helical segment; that stretch reads ACVGIMAVTWGIGFLHSVS. Residues 152 to 188 are Extracellular-facing; sequence QLAFAVHLLFCGPNEVDSFYCDLPRVIKLACTDTYRL. A helical transmembrane segment spans residues 189-212; the sequence is DIMVIANSGVLTVCSFVLLIISYT. Residues 213–228 are Cytoplasmic-facing; that stretch reads IILMTIQHRPLDKSSK. A helical membrane pass occupies residues 229 to 251; the sequence is ALSTLTAHITVVLLFFGPCVFIY. Residues 252-262 are Extracellular-facing; that stretch reads AWPFPIKSLDK. A helical membrane pass occupies residues 263 to 282; that stretch reads FLAVFYSVITPLLNPIIYTL. At 283-305 the chain is on the cytoplasmic side; the sequence is RNKDMKTAIRQLRKWDAHSSVKF.

This sequence belongs to the G-protein coupled receptor 1 family.

The protein localises to the cell membrane. Its function is as follows. Odorant receptor. The protein is Olfactory receptor 4F5 (OR4F5) of Homo sapiens (Human).